We begin with the raw amino-acid sequence, 141 residues long: Nucleoside diphosphate kinase (141 aa).

6 residues coordinate ATP: Lys-11, Phe-59, Arg-87, Thr-93, Arg-104, and Asn-114. The active-site Pros-phosphohistidine intermediate is His-117.

This sequence belongs to the NDK family. Homotetramer. The cofactor is Mg(2+).

The protein localises to the cytoplasm. It carries out the reaction a 2'-deoxyribonucleoside 5'-diphosphate + ATP = a 2'-deoxyribonucleoside 5'-triphosphate + ADP. The enzyme catalyses a ribonucleoside 5'-diphosphate + ATP = a ribonucleoside 5'-triphosphate + ADP. In terms of biological role, major role in the synthesis of nucleoside triphosphates other than ATP. The ATP gamma phosphate is transferred to the NDP beta phosphate via a ping-pong mechanism, using a phosphorylated active-site intermediate. The polypeptide is Nucleoside diphosphate kinase (Bordetella avium (strain 197N)).